Reading from the N-terminus, the 258-residue chain is Small ribosomal subunit protein uS2 (258 aa).

The disordered stretch occupies residues 226 to 258; it reads AQNKDVEPVADKDEKPEAAPVDEAETATETTGE. Residues 229–242 are compositionally biased toward basic and acidic residues; it reads KDVEPVADKDEKPE. The segment covering 245 to 258 has biased composition (acidic residues); it reads PVDEAETATETTGE.

Belongs to the universal ribosomal protein uS2 family.

The polypeptide is Small ribosomal subunit protein uS2 (Solidesulfovibrio magneticus (strain ATCC 700980 / DSM 13731 / RS-1) (Desulfovibrio magneticus)).